Consider the following 514-residue polypeptide: 2,3-bisphosphoglycerate-independent phosphoglycerate mutase (514 aa).

Mn(2+)-binding residues include aspartate 14 and serine 64. The Phosphoserine intermediate role is filled by serine 64. Substrate contacts are provided by residues histidine 125, 155 to 156 (RD), arginine 187, arginine 193, 263 to 266 (RADR), and lysine 336. Residues aspartate 403, histidine 407, aspartate 444, histidine 445, and histidine 463 each coordinate Mn(2+).

The protein belongs to the BPG-independent phosphoglycerate mutase family. As to quaternary structure, monomer. Mn(2+) is required as a cofactor.

It catalyses the reaction (2R)-2-phosphoglycerate = (2R)-3-phosphoglycerate. It participates in carbohydrate degradation; glycolysis; pyruvate from D-glyceraldehyde 3-phosphate: step 3/5. Functionally, catalyzes the interconversion of 2-phosphoglycerate and 3-phosphoglycerate. The protein is 2,3-bisphosphoglycerate-independent phosphoglycerate mutase of Shewanella baltica (strain OS185).